A 523-amino-acid chain; its full sequence is GMP synthase [glutamine-hydrolyzing] (523 aa).

The region spanning 8-205 is the Glutamine amidotransferase type-1 domain; that stretch reads KILILDFGSQ…VVDICGCETN (198 aa). Cysteine 85 functions as the Nucleophile in the catalytic mechanism. Catalysis depends on residues histidine 179 and glutamate 181. In terms of domain architecture, GMPS ATP-PPase spans 206-398; it reads WTAENIIEDA…LGLPAEMLNR (193 aa). Residue 233–239 coordinates ATP; the sequence is SGGVDSS.

In terms of assembly, homodimer.

The enzyme catalyses XMP + L-glutamine + ATP + H2O = GMP + L-glutamate + AMP + diphosphate + 2 H(+). It functions in the pathway purine metabolism; GMP biosynthesis; GMP from XMP (L-Gln route): step 1/1. In terms of biological role, catalyzes the synthesis of GMP from XMP. In Histophilus somni (strain 2336) (Haemophilus somnus), this protein is GMP synthase [glutamine-hydrolyzing].